An 815-amino-acid polypeptide reads, in one-letter code: Polyribonucleotide nucleotidyltransferase (815 aa).

Residues aspartate 489 and aspartate 495 each contribute to the Mg(2+) site. Residues 556 to 615 (PRFYTLQIPTDKIRDLIGPGGKVIRGIVEATGVKIDVEDSGKVNVASSDQEAAKKALKMI) form the KH domain. The region spanning 625 to 692 (GKTYLGTVTR…DGNRIKLSRK (68 aa)) is the S1 motif domain. The disordered stretch occupies residues 700–815 (AKMATEGGGD…GGGGGGRGRG (116 aa)). The span at 723 to 734 (APGGVTFEGGYE) shows a compositional bias: gly residues. A compositionally biased stretch (acidic residues) spans 735–745 (GGDEPEVEEGE). Positions 775–815 (PHGGGGGAGRGGRGRRPGGGGGGGRGGHGGRGGGGGGRGRG) are enriched in gly residues.

Belongs to the polyribonucleotide nucleotidyltransferase family. Mg(2+) is required as a cofactor.

The protein resides in the cytoplasm. The catalysed reaction is RNA(n+1) + phosphate = RNA(n) + a ribonucleoside 5'-diphosphate. Functionally, involved in mRNA degradation. Catalyzes the phosphorolysis of single-stranded polyribonucleotides processively in the 3'- to 5'-direction. The protein is Polyribonucleotide nucleotidyltransferase of Koribacter versatilis (strain Ellin345).